Reading from the N-terminus, the 515-residue chain is Serine/threonine-protein phosphatase PP-Z (515 aa).

A disordered region spans residues 1–186 (MGQGSSKHAD…SSTDPDDPET (186 aa)). A compositionally biased stretch (polar residues) spans 17–30 (PSFSRSDTQGSIKS). Ser-18 carries the post-translational modification Phosphoserine. Residues 40-51 (KGKDSNHDRRTS) show a composition bias toward basic and acidic residues. Over residues 63–74 (ETPPSLPPPPSP) the composition is skewed to pro residues. Over residues 91-109 (DSGNSSQSPTSPHPSNQPA) the composition is skewed to polar residues. Residues 126 to 143 (SSSSYAVSPTSPTSPTSS) are compositionally biased toward low complexity. Mn(2+)-binding residues include Asp-248, His-250, Asp-276, and Asn-308. His-309 (proton donor) is an active-site residue. Mn(2+) contacts are provided by His-357 and His-432. 2 positions are modified to phosphoserine: Ser-505 and Ser-514.

Belongs to the PPP phosphatase family. PP-Z subfamily. The cofactor is Mn(2+).

The protein resides in the cytoplasm. The catalysed reaction is O-phospho-L-seryl-[protein] + H2O = L-seryl-[protein] + phosphate. It catalyses the reaction O-phospho-L-threonyl-[protein] + H2O = L-threonyl-[protein] + phosphate. The polypeptide is Serine/threonine-protein phosphatase PP-Z (pzh1) (Schizosaccharomyces pombe (strain 972 / ATCC 24843) (Fission yeast)).